The sequence spans 350 residues: Heat-inducible transcription repressor HrcA (350 aa).

This sequence belongs to the HrcA family.

Functionally, negative regulator of class I heat shock genes (grpE-dnaK-dnaJ and groELS operons). Prevents heat-shock induction of these operons. This chain is Heat-inducible transcription repressor HrcA, found in Xanthomonas campestris pv. campestris (strain ATCC 33913 / DSM 3586 / NCPPB 528 / LMG 568 / P 25).